The sequence spans 329 residues: NADH-quinone oxidoreductase subunit H 1 (329 aa).

The next 8 helical transmembrane spans lie at 12–32 (LAKIALIFFVVLTLAAYLVFA), 78–98 (WLFYLAPAMAAIPAILTFAVI), 120–140 (VGLLFFLALSSIAVYGVALGG), 159–179 (LISYELSMGLSLVPTVMLAGS), 191–211 (GIWFIVYQPLAFVIFLISIAA), 242–262 (LFFVGEYINIIVLGGLATTFF), 270–290 (WLPPFVWFSAKTLAFAFFFIW), and 308–328 (WKVLTPLALVNILVTGWILML).

This sequence belongs to the complex I subunit 1 family. As to quaternary structure, NDH-1 is composed of 14 different subunits. Subunits NuoA, H, J, K, L, M, N constitute the membrane sector of the complex.

It is found in the cell inner membrane. It catalyses the reaction a quinone + NADH + 5 H(+)(in) = a quinol + NAD(+) + 4 H(+)(out). Its function is as follows. NDH-1 shuttles electrons from NADH, via FMN and iron-sulfur (Fe-S) centers, to quinones in the respiratory chain. The immediate electron acceptor for the enzyme in this species is believed to be ubiquinone. Couples the redox reaction to proton translocation (for every two electrons transferred, four hydrogen ions are translocated across the cytoplasmic membrane), and thus conserves the redox energy in a proton gradient. This subunit may bind ubiquinone. This Geobacter metallireducens (strain ATCC 53774 / DSM 7210 / GS-15) protein is NADH-quinone oxidoreductase subunit H 1.